A 696-amino-acid polypeptide reads, in one-letter code: Golgi integral membrane protein 4 (696 aa).

G2 carries N-myristoyl glycine lipidation. At 2–12 the chain is on the cytoplasmic side; it reads GNGMCSRKQKR. A helical; Signal-anchor for type II membrane protein transmembrane segment spans residues 13–33; it reads IFQTLLLLTVVFGFLYGAMLY. Residues 34–696 lie on the Lumenal side of the membrane; it reads YELQTQLRKA…AEKSHRRAEM (663 aa). Residues 35–244 adopt a coiled-coil conformation; it reads ELQTQLRKAE…KQLKDTLNRI (210 aa). Positions 38 to 107 are golgi targeting; it reads TQLRKAEAVA…ETLNKGRQDS (70 aa). The endosome targeting stretch occupies residues 80–175; sequence LEHKKAKEDF…QELSKLKETV (96 aa). 3 disordered regions span residues 122-145, 244-391, and 427-696; these read KSQH…QGED, IPSL…HARA, and LREH…RAEM. Over residues 123-145 the composition is skewed to basic and acidic residues; it reads SQHEELKKQHSDLEEEHRKQGED. Positions 176–248 are golgi targeting; the sequence is YNLREENRQL…DTLNRIPSLR (73 aa). Positions 254 to 269 are enriched in polar residues; sequence EQQNVTQVAHSPQGYN. N-linked (GlcNAc...) asparagine glycosylation is present at N257. Basic and acidic residues-rich tracts occupy residues 271-281, 298-313, 324-343, 355-364, and 370-380; these read AREKPTREVQE, RAED…KEAE, EVER…RKAL, EHLEEEHDPS, and REWKEQHEQRE. S364 is subject to Phosphoserine. Over residues 436 to 453 the composition is skewed to low complexity; that stretch reads QQRLQGHLLRQQEQQQQQ. Basic and acidic residues-rich tracts occupy residues 464-476 and 505-545; these read AELE…HQEQ and AYER…RAAV. S538 carries the post-translational modification Phosphoserine. The span at 604 to 626 shows a compositional bias: acidic residues; it reads QQEDNVDEQYQEEAEEEVQEDLT. The residue at position 613 (Y613) is a Phosphotyrosine. T626 is subject to Phosphothreonine. Composition is skewed to basic and acidic residues over residues 627-638 and 661-672; these read EEKKRELEHNAE and RDDNRPKGREEH. The residue at position 673 (Y673) is a Phosphotyrosine. Positions 673-683 are enriched in acidic residues; it reads YEEEEEEEEDG.

This sequence belongs to the GOLIM4 family. In terms of processing, phosphorylated probably by c-AMP-dependent kinases in its lumenal part. Post-translationally, O-glycosylated; modified by sialic acid residues. N-glycosylated; N-glycans are probably of the complex type and modified by sialic acid residues.

The protein localises to the golgi apparatus. It is found in the golgi stack membrane. The protein resides in the endosome membrane. Its subcellular location is the membrane. In terms of biological role, plays a role in endosome to Golgi protein trafficking; mediates protein transport along the late endosome-bypass pathway from the early endosome to the Golgi. The sequence is that of Golgi integral membrane protein 4 (GOLIM4) from Homo sapiens (Human).